A 183-amino-acid chain; its full sequence is Translocon-associated protein subunit beta (183 aa).

The signal sequence occupies residues 1 to 17 (MRLLAFAVLALFAVTQA). Over 18 to 146 (EEGARLLASK…REFDRRFSPH (129 aa)) the chain is Lumenal. Residue Asn-88 is glycosylated (N-linked (GlcNAc...) asparagine). Residues 147 to 167 (FLDWAAFGVMTLPSIGVPLLL) traverse the membrane as a helical segment. Over 168 to 183 (WYSSKRKYDTPKTKKN) the chain is Cytoplasmic.

This sequence belongs to the TRAP-beta family. In terms of assembly, heterotetramer of TRAP-alpha, TRAP-beta, TRAP-delta and TRAP-gamma. Interacts with STING1.

It localises to the endoplasmic reticulum membrane. Functionally, TRAP proteins are part of a complex whose function is to bind calcium to the ER membrane and thereby regulate the retention of ER resident proteins. The protein is Translocon-associated protein subunit beta (SSR2) of Bos taurus (Bovine).